Here is a 456-residue protein sequence, read N- to C-terminus: Enolase (456 aa).

Residue Gln164 participates in (2R)-2-phosphoglycerate binding. Catalysis depends on Glu207, which acts as the Proton donor. The Mg(2+) site is built by Asp244, Glu287, and Asp314. The (2R)-2-phosphoglycerate site is built by Lys339, Arg368, Ser369, and Lys390. Lys339 serves as the catalytic Proton acceptor.

It belongs to the enolase family. In terms of assembly, component of the RNA degradosome, a multiprotein complex involved in RNA processing and mRNA degradation. Mg(2+) is required as a cofactor.

It is found in the cytoplasm. It localises to the secreted. The protein localises to the cell surface. The enzyme catalyses (2R)-2-phosphoglycerate = phosphoenolpyruvate + H2O. It functions in the pathway carbohydrate degradation; glycolysis; pyruvate from D-glyceraldehyde 3-phosphate: step 4/5. Its function is as follows. Catalyzes the reversible conversion of 2-phosphoglycerate (2-PG) into phosphoenolpyruvate (PEP). It is essential for the degradation of carbohydrates via glycolysis. The polypeptide is Enolase (Francisella tularensis subsp. holarctica (strain OSU18)).